Here is a 260-residue protein sequence, read N- to C-terminus: HMP-PP phosphatase (260 aa).

Residue Asp-8 is the Nucleophile of the active site. The Mg(2+) site is built by Asp-8, Asp-10, and Asp-212.

Belongs to the HAD-like hydrolase superfamily. Cof family. Requires Mg(2+) as cofactor.

It carries out the reaction 4-amino-2-methyl-5-(diphosphooxymethyl)pyrimidine + H2O = 4-amino-2-methyl-5-(phosphooxymethyl)pyrimidine + phosphate + H(+). Its function is as follows. Catalyzes the hydrolysis of 4-amino-2-methyl-5-hydroxymethylpyrimidine pyrophosphate (HMP-PP) to 4-amino-2-methyl-5-hydroxymethylpyrimidine phosphate (HMP-P). This is HMP-PP phosphatase from Shigella boydii serotype 4 (strain Sb227).